Here is a 268-residue protein sequence, read N- to C-terminus: MAQNRVSRLMQEDRKFLIAYYMPEFPLPGSTLPVLEALQKSGVDIIELGMPYSDPIGDGPVIQDAAHTAIGNGVHIAGILDLVRKARAGEGCEKITVPLLLMGYCSPLIAYGGDCFLSDASEAGVDGLLIPDLPPEEAEDFLFRARGFGLSVIFFISPETPPERIGMIDGLSTDFSYCFAVNATTGTAKLAGADSERDIESYLRRVREHTKKKFVVGFGIKDRARVEKMWNLADGAVVGTALLQAIRNASTPEEVALMTAEFWKTLKS.

Catalysis depends on proton acceptor residues glutamate 47 and aspartate 58.

Belongs to the TrpA family. Tetramer of two alpha and two beta chains.

It catalyses the reaction (1S,2R)-1-C-(indol-3-yl)glycerol 3-phosphate + L-serine = D-glyceraldehyde 3-phosphate + L-tryptophan + H2O. It functions in the pathway amino-acid biosynthesis; L-tryptophan biosynthesis; L-tryptophan from chorismate: step 5/5. Its function is as follows. The alpha subunit is responsible for the aldol cleavage of indoleglycerol phosphate to indole and glyceraldehyde 3-phosphate. This chain is Tryptophan synthase alpha chain, found in Chlorobium phaeobacteroides (strain BS1).